A 138-amino-acid polypeptide reads, in one-letter code: ATP synthase epsilon chain (138 aa).

It belongs to the ATPase epsilon chain family. In terms of assembly, F-type ATPases have 2 components, CF(1) - the catalytic core - and CF(0) - the membrane proton channel. CF(1) has five subunits: alpha(3), beta(3), gamma(1), delta(1), epsilon(1). CF(0) has three main subunits: a, b and c.

Its subcellular location is the cell inner membrane. Produces ATP from ADP in the presence of a proton gradient across the membrane. This chain is ATP synthase epsilon chain, found in Verminephrobacter eiseniae (strain EF01-2).